The sequence spans 251 residues: MSLDNDINTKKRKLQDDEKPRKKRKHKRPTRDDDADLDVEAGLNRAFARMDGQLLADHLAQKTRRFGTELSSVELNDLYISAASIRDSSSFEKDRTLENLPSFLEKFAQEKEKLDEAPKKNGSPHTLIVAAAGLRAADLVRACRKFQKKGSPVAKLFAKHFKLEEQVAFLNKTRTGIAVGTPQRLIDLIEHGALSVENLRRIVVDASHIDQKKRNITDMRETMMPLAKLLARADFKERYTDEKKHIDLLFY.

The interval Met1–Leu37 is disordered.

The protein belongs to the CMS1 family.

The protein localises to the nucleus. Its function is as follows. May play a role in the regulation of DNA replication and cell cycle control. The sequence is that of Protein CMS1 (CSM1) from Chaetomium thermophilum (strain DSM 1495 / CBS 144.50 / IMI 039719) (Thermochaetoides thermophila).